We begin with the raw amino-acid sequence, 127 residues long: Large ribosomal subunit protein bL17 (127 aa).

It belongs to the bacterial ribosomal protein bL17 family. As to quaternary structure, part of the 50S ribosomal subunit. Contacts protein L32.

The polypeptide is Large ribosomal subunit protein bL17 (Xanthomonas campestris pv. campestris (strain 8004)).